Reading from the N-terminus, the 134-residue chain is D-xylulose reductase (134 aa).

Residues 31–115 (PATTTXYKXQ…XXQXDKIGRY (85 aa)) form a disordered region. Residues 50-59 (QTHEGTHQDV) are compositionally biased toward basic and acidic residues.

The protein belongs to the zinc-containing alcohol dehydrogenase family.

The enzyme catalyses xylitol + NAD(+) = D-xylulose + NADH + H(+). Its activity is regulated as follows. Activated by calcium and inhibited by zinc. This chain is D-xylulose reductase, found in Sus scrofa (Pig).